The sequence spans 343 residues: Protein RecA (343 aa).

65 to 72 (GPESSGKT) is an ATP binding site.

It belongs to the RecA family.

It is found in the cytoplasm. In terms of biological role, can catalyze the hydrolysis of ATP in the presence of single-stranded DNA, the ATP-dependent uptake of single-stranded DNA by duplex DNA, and the ATP-dependent hybridization of homologous single-stranded DNAs. It interacts with LexA causing its activation and leading to its autocatalytic cleavage. This chain is Protein RecA, found in Campylobacter jejuni subsp. jejuni serotype O:6 (strain 81116 / NCTC 11828).